The sequence spans 530 residues: Glutamate--cysteine ligase (530 aa).

It belongs to the glutamate--cysteine ligase type 1 family. Type 1 subfamily.

It catalyses the reaction L-cysteine + L-glutamate + ATP = gamma-L-glutamyl-L-cysteine + ADP + phosphate + H(+). It functions in the pathway sulfur metabolism; glutathione biosynthesis; glutathione from L-cysteine and L-glutamate: step 1/2. This is Glutamate--cysteine ligase from Pseudomonas entomophila (strain L48).